Consider the following 443-residue polypeptide: UDP-N-acetylmuramate--L-alanine ligase (443 aa).

110–116 provides a ligand contact to ATP; the sequence is GAHGKTS.

This sequence belongs to the MurCDEF family.

It is found in the cytoplasm. It carries out the reaction UDP-N-acetyl-alpha-D-muramate + L-alanine + ATP = UDP-N-acetyl-alpha-D-muramoyl-L-alanine + ADP + phosphate + H(+). Its pathway is cell wall biogenesis; peptidoglycan biosynthesis. In terms of biological role, cell wall formation. The polypeptide is UDP-N-acetylmuramate--L-alanine ligase (Streptococcus agalactiae serotype III (strain NEM316)).